The chain runs to 877 residues: Leucine--tRNA ligase (877 aa).

A 'HIGH' region motif is present at residues P43 to H53. A 'KMSKS' region motif is present at residues K628 to S632. ATP is bound at residue K631.

It belongs to the class-I aminoacyl-tRNA synthetase family.

It localises to the cytoplasm. It catalyses the reaction tRNA(Leu) + L-leucine + ATP = L-leucyl-tRNA(Leu) + AMP + diphosphate. The polypeptide is Leucine--tRNA ligase (Brucella suis biovar 1 (strain 1330)).